The following is a 436-amino-acid chain: Adenylosuccinate synthetase (436 aa).

GTP-binding positions include Gly12–Lys18 and Gly40–Thr42. Catalysis depends on Asp13, which acts as the Proton acceptor. Residues Asp13 and Gly40 each coordinate Mg(2+). IMP-binding positions include Asp13–Lys16, Asn38–His41, Thr128, Arg142, Gln223, Thr238, and Arg302. The active-site Proton donor is the His41. Thr298 to Arg304 contacts substrate. Residues Arg304, Lys330 to Asp332, and Ser412 to Gly414 contribute to the GTP site.

This sequence belongs to the adenylosuccinate synthetase family. As to quaternary structure, homodimer. Requires Mg(2+) as cofactor.

The protein localises to the cytoplasm. The catalysed reaction is IMP + L-aspartate + GTP = N(6)-(1,2-dicarboxyethyl)-AMP + GDP + phosphate + 2 H(+). It participates in purine metabolism; AMP biosynthesis via de novo pathway; AMP from IMP: step 1/2. Plays an important role in the de novo pathway of purine nucleotide biosynthesis. Catalyzes the first committed step in the biosynthesis of AMP from IMP. The sequence is that of Adenylosuccinate synthetase from Prochlorococcus marinus (strain AS9601).